Consider the following 130-residue polypeptide: uncharacterized protein (130 aa).

Disordered regions lie at residues M1–T47 and Q78–S130. Residues Q13–S33 are compositionally biased toward polar residues. Basic residues predominate over residues P86 to T110. The segment covering S117–S130 has biased composition (basic and acidic residues).

This is an uncharacterized protein from Torque teno mini virus 1 (isolate TLMV-CBD279).